The following is a 120-amino-acid chain: Ribonuclease P protein component (120 aa).

It belongs to the RnpA family. In terms of assembly, consists of a catalytic RNA component (M1 or rnpB) and a protein subunit.

It carries out the reaction Endonucleolytic cleavage of RNA, removing 5'-extranucleotides from tRNA precursor.. In terms of biological role, RNaseP catalyzes the removal of the 5'-leader sequence from pre-tRNA to produce the mature 5'-terminus. It can also cleave other RNA substrates such as 4.5S RNA. The protein component plays an auxiliary but essential role in vivo by binding to the 5'-leader sequence and broadening the substrate specificity of the ribozyme. This chain is Ribonuclease P protein component, found in Acidothermus cellulolyticus (strain ATCC 43068 / DSM 8971 / 11B).